A 432-amino-acid polypeptide reads, in one-letter code: Vacuolar protein sorting-associated protein 38 (432 aa).

Asn-20 carries N-linked (GlcNAc...) asparagine glycosylation. Positions 216-287 form a coiled coil; that stretch reads LDTYQENIKM…KEAIEKLQKK (72 aa). A helical transmembrane segment spans residues 348-365; the sequence is IINAMLGFYSLFIVIYSY.

This sequence belongs to the VPS38 family. As to quaternary structure, component of the VPS34 PI3-kinase complex II composed of VPS15, VPS30, VPS34 and VPS38.

It is found in the golgi apparatus. It localises to the trans-Golgi network membrane. The protein localises to the endosome membrane. Functionally, involved in endosome-to-Golgi retrograde transport as part of the VPS34 PI3-kinase complex II. This complex is required for the endosome-to-Golgi retrieval of PEP1 and KEX2, and the recruitment of VPS5 and VPS7, two components of the retromer complex, to endosomal membranes (probably through generating a specific pool of phosphatidylinositol 3-phosphate allowing the recruitment of the retromer complex proteins to the endosome). Mediates the interaction between VPS30 and the VPS34-VPS15 core complex, leading to the recruitment of VPS30 to the membrane. The chain is Vacuolar protein sorting-associated protein 38 from Candida glabrata (strain ATCC 2001 / BCRC 20586 / JCM 3761 / NBRC 0622 / NRRL Y-65 / CBS 138) (Yeast).